Reading from the N-terminus, the 379-residue chain is Transcription factor TIP2 (379 aa).

The disordered stretch occupies residues 144 to 184 (MVGPFESSPTPRSGGGRKRSRATAGFHGGGPANGVEKKEKQ). The basic motif; degenerate stretch occupies residues 173–186 (GPANGVEKKEKQRR). The bHLH domain maps to 173–222 (GPANGVEKKEKQRRLRLTEKYNALMLLIPNRTKEDRATVISDAIEYIQEL). The helix-loop-helix motif stretch occupies residues 187 to 222 (LRLTEKYNALMLLIPNRTKEDRATVISDAIEYIQEL).

This sequence belongs to the bHLH protein family. As to quaternary structure, homodimer. Interacts with TDR, but not with EAT1. In terms of tissue distribution, highly expressed in anthers; strong expression in the middle layer and tapetum, and weak expression in the endothecium.

Its subcellular location is the nucleus. In terms of biological role, transcription factor that binds to the E-box-containing promoter regions of the transcription factors TDR and EAT1, activating their expression. May have a role in specifying the cell pattern of the inner anther walls and functioning in meiosis progression. Required for male reproduction. Acts downstream of UDT1 and GAMYB, but upstream of TDR1 and EAT1 in pollen development. The sequence is that of Transcription factor TIP2 (TIP2) from Oryza sativa subsp. japonica (Rice).